Reading from the N-terminus, the 831-residue chain is DNA replication licensing factor MCM6 (831 aa).

The C4-type zinc-finger motif lies at 155-182 (CLDCGSVIKNVEQQFKYTQPTICVSPTC). The segment at 258–278 (GERAECRRDSSQQKSSTAGHE) is disordered. Positions 259–268 (ERAECRRDSS) are enriched in basic and acidic residues. The MCM domain maps to 345–551 (YFNKLVGSMA…VTDYHIAHHI (207 aa)). 395-402 (GDPSCAKS) contacts ATP. The Arginine finger signature appears at 527-530 (SRFD). The segment at 666–705 (SEYQDANGDNMDDTDDIENPVDGEEDQQNGAAEPASATAD) is disordered. Acidic residues predominate over residues 675-692 (NMDDTDDIENPVDGEEDQ).

Belongs to the MCM family. As to quaternary structure, component of the minichromosome maintenance (MCM) complex, a heterotetramer composed of MCM2, MCM3, MCM4, MCM5, MCM6 and MCM7. Interacts with ETG1. Expressed in shoot apex and flower buds.

It is found in the nucleus. It carries out the reaction ATP + H2O = ADP + phosphate + H(+). In terms of biological role, probable component of the MCM2-7 complex (MCM complex) that may function as a DNA helicase and which is essential to undergo a single round of replication initiation and elongation per cell cycle in eukaryotic cells. The polypeptide is DNA replication licensing factor MCM6 (MCM6) (Arabidopsis thaliana (Mouse-ear cress)).